A 109-amino-acid chain; its full sequence is Small ribosomal subunit protein uS17 (109 aa).

This sequence belongs to the universal ribosomal protein uS17 family. As to quaternary structure, part of the 30S ribosomal subunit.

Its function is as follows. One of the primary rRNA binding proteins, it binds specifically to the 5'-end of 16S ribosomal RNA. The chain is Small ribosomal subunit protein uS17 from Thermoplasma acidophilum (strain ATCC 25905 / DSM 1728 / JCM 9062 / NBRC 15155 / AMRC-C165).